Here is a 578-residue protein sequence, read N- to C-terminus: MRPALGHPRSVSSASGSFPPPPAAARLQPLFLRGGSFRGRRGSGDSSTSTSTSRGGGGGRRGGGGGSPSSSTGAEREDDDESLSVSKPLVPNAALLGPPAQVGAPAGPAPVAFSSSAATSSSTSTPTSSCSMTAADFGGGAAAGAVGGPGSRSAGGAGGTGTGSGASCCPCCCCCGCPDRPGRRGRRRGCAPSPRCRWGYQALSVVLLLAQGGLLDLYLIAVTDLYWCSWIATDLVVVVGWAIFFAKNSRGRRGGAASGAHNHHLHHHHAAPPLHLPAPSAATAGAKARGARGGAGGAGGGLGAAAAAGEFAFAYLAWLIYSIAFTPKVVLILGTSILDLIELRAPFGTTGFRLTMALSVPLLYSLVRAISEAGAPPGSAGPLLLQPQRHRAAGCFLGTCLDLLDSFTLVELMLEGRVPLPAHLRYLLIAVYFLTLASPVLWLYELNAAAAAAASWGQASGPGSCSRLLRLLGGCLVDVPLLALRCLLVVSYQQPLSIFMLKNLFFLGCRGLEALEGCWDRGNRASPSRARGGYGAPPSAPPPPPPPPQGGSQLGHCISENEGGAHGYVNTLAVASQN.

Disordered stretches follow at residues 1-84 and 106-129; these read MRPA…ESLS and AGPAPVAFSSSAATSSSTSTPTSS. Composition is skewed to low complexity over residues 8 to 17 and 44 to 53; these read PRSVSSASGS and GDSSTSTSTS. The span at 54-67 shows a compositional bias: gly residues; the sequence is RGGGGGRRGGGGGS. Phosphoserine is present on Ser167. The interval 529 to 557 is disordered; the sequence is RARGGYGAPPSAPPPPPPPPQGGSQLGHC. Over residues 538-549 the composition is skewed to pro residues; it reads PSAPPPPPPPPQ. Ser552 bears the Phosphoserine mark.

It belongs to the TMEM121 family. Widely expressed, especially in adult heart, brain, prostate, testes, peripherical blood leukocytes and fetal brain.

The sequence is that of Transmembrane protein 121B from Homo sapiens (Human).